A 294-amino-acid polypeptide reads, in one-letter code: Cytidine deaminase (294 aa).

CMP/dCMP-type deaminase domains lie at 48 to 168 (DEDA…FGPK) and 186 to 294 (LTGD…VLLA). 89 to 91 (NME) is a substrate binding site. Position 102 (His102) interacts with Zn(2+). Residue Glu104 is the Proton donor of the active site. Positions 129 and 132 each coordinate Zn(2+).

This sequence belongs to the cytidine and deoxycytidylate deaminase family. Homodimer. Zn(2+) is required as a cofactor.

It carries out the reaction cytidine + H2O + H(+) = uridine + NH4(+). It catalyses the reaction 2'-deoxycytidine + H2O + H(+) = 2'-deoxyuridine + NH4(+). This enzyme scavenges exogenous and endogenous cytidine and 2'-deoxycytidine for UMP synthesis. The sequence is that of Cytidine deaminase from Escherichia coli (strain ATCC 8739 / DSM 1576 / NBRC 3972 / NCIMB 8545 / WDCM 00012 / Crooks).